Here is a 417-residue protein sequence, read N- to C-terminus: Gamma-glutamyl phosphate reductase (417 aa).

It belongs to the gamma-glutamyl phosphate reductase family.

It is found in the cytoplasm. The enzyme catalyses L-glutamate 5-semialdehyde + phosphate + NADP(+) = L-glutamyl 5-phosphate + NADPH + H(+). It participates in amino-acid biosynthesis; L-proline biosynthesis; L-glutamate 5-semialdehyde from L-glutamate: step 2/2. In terms of biological role, catalyzes the NADPH-dependent reduction of L-glutamate 5-phosphate into L-glutamate 5-semialdehyde and phosphate. The product spontaneously undergoes cyclization to form 1-pyrroline-5-carboxylate. This Klebsiella pneumoniae (strain 342) protein is Gamma-glutamyl phosphate reductase.